A 239-amino-acid chain; its full sequence is 2,3,4,5-tetrahydropyridine-2,6-dicarboxylate N-acetyltransferase (239 aa).

This sequence belongs to the transferase hexapeptide repeat family. DapH subfamily.

The catalysed reaction is (S)-2,3,4,5-tetrahydrodipicolinate + acetyl-CoA + H2O = L-2-acetamido-6-oxoheptanedioate + CoA. Its pathway is amino-acid biosynthesis; L-lysine biosynthesis via DAP pathway; LL-2,6-diaminopimelate from (S)-tetrahydrodipicolinate (acetylase route): step 1/3. Functionally, catalyzes the transfer of an acetyl group from acetyl-CoA to tetrahydrodipicolinate. This Staphylococcus carnosus (strain TM300) protein is 2,3,4,5-tetrahydropyridine-2,6-dicarboxylate N-acetyltransferase.